The primary structure comprises 156 residues: Small ribosomal subunit protein uS7c (156 aa).

It belongs to the universal ribosomal protein uS7 family. As to quaternary structure, part of the 30S ribosomal subunit.

The protein localises to the plastid. It is found in the chloroplast. In terms of biological role, one of the primary rRNA binding proteins, it binds directly to 16S rRNA where it nucleates assembly of the head domain of the 30S subunit. The protein is Small ribosomal subunit protein uS7c (rps7) of Tupiella akineta (Green alga).